The primary structure comprises 95 residues: Protein FAM240C (95 aa).

Positions 68–95 (KMLQGPGRCPDRVPEATESLHTKDKKAA) are disordered. Over residues 76–95 (CPDRVPEATESLHTKDKKAA) the composition is skewed to basic and acidic residues.

This sequence belongs to the FAM240 family.

In Homo sapiens (Human), this protein is Protein FAM240C (FAM240C).